Here is a 333-residue protein sequence, read N- to C-terminus: Pro-cathepsin H (333 aa).

The N-terminal stretch at 1–20 is a signal peptide; sequence MWAALPLLCAGAWLLSTGAT. The propeptide at 21–95 is activation peptide; sequence AELTVNAIEK…AEIKHKFLWS (75 aa). N-linked (GlcNAc...) asparagine glycans are attached at residues N70 and N99. Cystine bridges form between C100-C325, C136-C179, C170-C212, and C270-C320. The propeptide occupies 104–113; the sequence is KSNYLRGTGP. C139 is an active-site residue. N228 carries N-linked (GlcNAc...) asparagine glycosylation. Catalysis depends on residues H279 and N299.

The protein belongs to the peptidase C1 family. As to quaternary structure, composed of a mini chain and a large chain. The large chain may be split into heavy and light chain. All chains are held together by disulfide bonds. As to expression, widely expressed with highest expression found in non-skeletal tissues. Low levels found in skeletal tissue.

Its subcellular location is the lysosome. The catalysed reaction is Hydrolysis of proteins, acting as an aminopeptidase (notably, cleaving Arg-|-Xaa bonds) as well as an endopeptidase.. Its function is as follows. Important for the overall degradation of proteins in lysosomes. The sequence is that of Pro-cathepsin H (Ctsh) from Mus musculus (Mouse).